The sequence spans 210 residues: Uridine kinase (210 aa).

12 to 19 (GGSGSGKT) is a binding site for ATP.

The protein belongs to the uridine kinase family.

Its subcellular location is the cytoplasm. It carries out the reaction uridine + ATP = UMP + ADP + H(+). It catalyses the reaction cytidine + ATP = CMP + ADP + H(+). It participates in pyrimidine metabolism; CTP biosynthesis via salvage pathway; CTP from cytidine: step 1/3. The protein operates within pyrimidine metabolism; UMP biosynthesis via salvage pathway; UMP from uridine: step 1/1. The polypeptide is Uridine kinase (Leuconostoc citreum (strain KM20)).